The primary structure comprises 359 residues: MTPSVMDRAVLTMAAFGTGMLGAASFVWCFLFRSLFASCVLERAVDELFFWGSLCVQVMMLFFCFRKYSKTLSRYLDLICAVNIVALFGCLICLQYKMGFRTYLPILFSLNLIWLSVWLPVTFEAVYLCPPYANAYFQLGFFTATTVHYLLLSFGSVTTSFLFIPFACFLIAGLYSLRVLKKQEEFKSAILDRRAIFITRDNLYVTINFSVIPSFIGMELCVVAVMTVGFAVFMTAAGVYTDVVKVLKTYLLMFQFGTFCVGGMGYPSRKATFVYCMTACILMPLVFVLQDLTIKSVLFLAIFFLFINGVTCETTIMLAKLKKGINGPKIVLSVCLLVNICITLSLNVLYKVYIETLKK.

11 helical membrane-spanning segments follow: residues T12–F32, V45–F65, Y75–Q95, Y103–F123, Y132–L152, F154–L174, L220–Y240, V246–Y266, A271–L289, S296–L318, and I330–Y350.

This sequence belongs to the herpesviridae BMRF2 family.

Its subcellular location is the host membrane. The chain is Gene 58 protein (58) from Equine herpesvirus 2 (strain 86/87) (EHV-2).